The following is a 137-amino-acid chain: Secreted RxLR effector protein 67 (137 aa).

An N-terminal signal peptide occupies residues 1-18 (MRLYILVLAAIAVTLVFA). The short motif at 32-61 (RALRQASITDEKSDDSLNAQAPPLSKSEKR) is the RxLR-dEER element. A disordered region spans residues 40 to 65 (TDEKSDDSLNAQAPPLSKSEKRLSRS). A helical membrane pass occupies residues 114 to 134 (WFVRMILEAGIFWAVFHCLSA).

Belongs to the RxLR effector family.

Its subcellular location is the secreted. It localises to the host cytoplasm. The protein resides in the host nucleus. The protein localises to the membrane. Its function is as follows. Effector that partially suppresses the tobacco programmed cell death induced by cell death-inducing proteins. This Plasmopara viticola (Downy mildew of grapevine) protein is Secreted RxLR effector protein 67.